Here is a 214-residue protein sequence, read N- to C-terminus: tRNA (guanine-N(7)-)-methyltransferase (214 aa).

Residues E45, E70, D97, and D119 each coordinate S-adenosyl-L-methionine. D119 is an active-site residue. Substrate-binding positions include K123, D155, and 192–195; that span reads TEYE.

It belongs to the class I-like SAM-binding methyltransferase superfamily. TrmB family.

It carries out the reaction guanosine(46) in tRNA + S-adenosyl-L-methionine = N(7)-methylguanosine(46) in tRNA + S-adenosyl-L-homocysteine. The protein operates within tRNA modification; N(7)-methylguanine-tRNA biosynthesis. Functionally, catalyzes the formation of N(7)-methylguanine at position 46 (m7G46) in tRNA. In Clostridioides difficile (strain 630) (Peptoclostridium difficile), this protein is tRNA (guanine-N(7)-)-methyltransferase.